The sequence spans 417 residues: Probable serine incorporator (417 aa).

The next 10 membrane-spanning stretches (helical) occupy residues 25-45 (VYVVFFLLVSIVAYILSYWTF), 69-89 (VVYRLTFGLALYHILLGLVMI), 104-124 (GYWPLKILLLGVLIFVSFFIP), 131-151 (YTWISIFSAAIFIFIQLVLLI), 180-200 (CVLSFGSIALAVAGTVLMLVF), 208-228 (INQFYIVFNLGICLIVGVLSI), 239-259 (SGLFQSGVVMLYCTYLIYSAI), 276-296 (KESTIIIGAVFTIISVCYSAF), 339-359 (FFHFTFACGAMYLSALLTNWA), and 391-411 (VVSSWVVVLLYLWTLIGPILL).

This sequence belongs to the TDE1 family.

The protein resides in the endoplasmic reticulum membrane. Its function is as follows. Enhances the incorporation of serine into phosphatidylserine and sphingolipids. This Dictyostelium discoideum (Social amoeba) protein is Probable serine incorporator (serinc).